The primary structure comprises 146 residues: Hemoglobin subunit beta-2 (146 aa).

The Globin domain occupies Glu-2 to His-146. Heme b contacts are provided by His-63 and His-92.

It belongs to the globin family. As to quaternary structure, hb3 is a heterotetramer of two alpha-2 chains and two beta-2 chains. Red blood cells.

Its function is as follows. Involved in oxygen transport from gills to the various peripheral tissues. This is Hemoglobin subunit beta-2 (hbb2) from Anarhichas minor (Arctic spotted wolffish).